Reading from the N-terminus, the 476-residue chain is Cysteine--tRNA ligase (476 aa).

Cysteine 28 lines the Zn(2+) pocket. The 'HIGH' region motif lies at 30–40 (PTVYDNTHLGH). The Zn(2+) site is built by cysteine 208, histidine 233, and glutamate 237. A 'KMSKS' region motif is present at residues 265 to 269 (KMSKS). Lysine 268 contributes to the ATP binding site.

The protein belongs to the class-I aminoacyl-tRNA synthetase family. Zn(2+) is required as a cofactor.

Its subcellular location is the cytoplasm. It catalyses the reaction tRNA(Cys) + L-cysteine + ATP = L-cysteinyl-tRNA(Cys) + AMP + diphosphate. In Methanococcus maripaludis (strain DSM 14266 / JCM 13030 / NBRC 101832 / S2 / LL), this protein is Cysteine--tRNA ligase.